Here is a 34-residue protein sequence, read N- to C-terminus: Non-toxic venom protein (34 aa).

An LCN-type CS-alpha/beta domain is found at 1–34 (KEGYPTNSEGCKITXLFNDPYCKGXCINLSTQAD).

As to expression, expressed by the venom gland.

It localises to the secreted. Does not cause symptoms of intoxication, paralysis or death in insects (A.domestica). This chain is Non-toxic venom protein, found in Rhopalurus junceus (Caribbean blue scorpion).